The chain runs to 491 residues: MRLISKRRIRFIVFILFGVLTVFVVSRLVVHFQYNQEIKFYKKYFQQRKDGLHEIYNPLEIKQIPKETIDDLYTARLDKELKNGEVIEWSKFAYVNYVTNADYLCNTLIIFNDLKQEFETKAKLVLLISKDLLDPNTSSNVAYISSLLNKIQAIDEDQVVIKLIDNIVKPKDTTPWNESLTKLLVFNQTEFDRVIYLDNDAILRSSLDELFFLPNYIKFAAPLTYWFLSNSDLEKSYHETRHREKQPINLQSYTKVLTKRIGKGQMIYNHLPSLPHSLYLNSNNIAQDIISSTSSLSPLFDFQSSKKVGKLKFASNLMVINPSKEAFDEIVNVMLPKILNKKEKYDMDLINEEMYNLKKIIYKQFIFFRKVRKLFKPEVLVLPFARYGLLTGSLRNPRHYSIIYNDVLGYKTLDNDGNDIPVGLNDSVAYSKYIHFSDYPLAKPWNYPSMKEFECIVKEEDAEDSKLEHQACDLWNSVYASYIQSREICLV.

Topologically, residues 1–10 are cytoplasmic; the sequence is MRLISKRRIR. A helical; Signal-anchor for type II membrane protein transmembrane segment spans residues 11 to 31; that stretch reads FIVFILFGVLTVFVVSRLVVH. Residues 32–491 lie on the Lumenal side of the membrane; that stretch reads FQYNQEIKFY…YIQSREICLV (460 aa). Residues Asn-136, Asn-177, and Asn-187 are each glycosylated (N-linked (GlcNAc...) asparagine). Positions 198-200 match the DXD motif; that stretch reads DND. N-linked (GlcNAc...) asparagine glycosylation occurs at Asn-425.

It belongs to the GNT1 family. In terms of processing, N-glycosylated.

It is found in the golgi apparatus membrane. The protein localises to the vacuole membrane. Functionally, N-acetylglucosaminyltransferase involved in the Golgi-specific modification of N-linked glycans. The polypeptide is Glucose N-acetyltransferase 1 (GNT1) (Saccharomyces cerevisiae (strain ATCC 204508 / S288c) (Baker's yeast)).